The following is a 247-amino-acid chain: Probable transcriptional regulatory protein GTNG_2524 (247 aa).

Residues Met1–Lys14 are compositionally biased toward basic residues. The interval Met1–Arg21 is disordered.

It belongs to the TACO1 family.

Its subcellular location is the cytoplasm. The polypeptide is Probable transcriptional regulatory protein GTNG_2524 (Geobacillus thermodenitrificans (strain NG80-2)).